A 196-amino-acid polypeptide reads, in one-letter code: Probable GTP-binding protein EngB (196 aa).

The region spanning 22-195 (NIPEIALVGR…WQWIEERMGK (174 aa)) is the EngB-type G domain. GTP-binding positions include 30–37 (GRSNVGKS), 57–61 (GKTQT), 75–78 (DVPG), 142–145 (TKID), and 174–176 (FSA). The Mg(2+) site is built by Ser-37 and Thr-59.

Belongs to the TRAFAC class TrmE-Era-EngA-EngB-Septin-like GTPase superfamily. EngB GTPase family. Mg(2+) is required as a cofactor.

Functionally, necessary for normal cell division and for the maintenance of normal septation. This Limosilactobacillus reuteri (strain DSM 20016) (Lactobacillus reuteri) protein is Probable GTP-binding protein EngB.